A 294-amino-acid chain; its full sequence is Phosphatidylserine decarboxylase proenzyme (294 aa).

Active-site charge relay system; for autoendoproteolytic cleavage activity residues include Asp113, His169, and Ser256. Ser256 serves as the catalytic Schiff-base intermediate with substrate; via pyruvic acid; for decarboxylase activity. Pyruvic acid (Ser); by autocatalysis is present on Ser256.

This sequence belongs to the phosphatidylserine decarboxylase family. PSD-B subfamily. Prokaryotic type II sub-subfamily. As to quaternary structure, heterodimer of a large membrane-associated beta subunit and a small pyruvoyl-containing alpha subunit. Pyruvate is required as a cofactor. Is synthesized initially as an inactive proenzyme. Formation of the active enzyme involves a self-maturation process in which the active site pyruvoyl group is generated from an internal serine residue via an autocatalytic post-translational modification. Two non-identical subunits are generated from the proenzyme in this reaction, and the pyruvate is formed at the N-terminus of the alpha chain, which is derived from the carboxyl end of the proenzyme. The autoendoproteolytic cleavage occurs by a canonical serine protease mechanism, in which the side chain hydroxyl group of the serine supplies its oxygen atom to form the C-terminus of the beta chain, while the remainder of the serine residue undergoes an oxidative deamination to produce ammonia and the pyruvoyl prosthetic group on the alpha chain. During this reaction, the Ser that is part of the protease active site of the proenzyme becomes the pyruvoyl prosthetic group, which constitutes an essential element of the active site of the mature decarboxylase.

It is found in the cell membrane. It carries out the reaction a 1,2-diacyl-sn-glycero-3-phospho-L-serine + H(+) = a 1,2-diacyl-sn-glycero-3-phosphoethanolamine + CO2. It functions in the pathway phospholipid metabolism; phosphatidylethanolamine biosynthesis; phosphatidylethanolamine from CDP-diacylglycerol: step 2/2. Functionally, catalyzes the formation of phosphatidylethanolamine (PtdEtn) from phosphatidylserine (PtdSer). The polypeptide is Phosphatidylserine decarboxylase proenzyme (Clostridium perfringens (strain SM101 / Type A)).